A 122-amino-acid polypeptide reads, in one-letter code: Small ribosomal subunit protein uS13 (122 aa).

Residues 98-122 (VRGQKTKSNARTRKGPRPSRIKKKK) form a disordered region. A compositionally biased stretch (basic residues) spans 101–122 (QKTKSNARTRKGPRPSRIKKKK).

Belongs to the universal ribosomal protein uS13 family. In terms of assembly, part of the 30S ribosomal subunit. Forms a loose heterodimer with protein S19. Forms two bridges to the 50S subunit in the 70S ribosome.

In terms of biological role, located at the top of the head of the 30S subunit, it contacts several helices of the 16S rRNA. In the 70S ribosome it contacts the 23S rRNA (bridge B1a) and protein L5 of the 50S subunit (bridge B1b), connecting the 2 subunits; these bridges are implicated in subunit movement. Contacts the tRNAs in the A and P-sites. The sequence is that of Small ribosomal subunit protein uS13 from Thermosipho africanus (strain TCF52B).